Here is a 550-residue protein sequence, read N- to C-terminus: Metal transporter Nramp4 (550 aa).

Over residues methionine 1–glutamine 13 the composition is skewed to basic and acidic residues. Residues methionine 1–glycine 37 form a disordered region. Positions glutamine 14–alanine 29 are enriched in low complexity. 12 helical membrane-spanning segments follow: residues phenylalanine 72–leucine 92, serine 105–alanine 125, leucine 151–alanine 171, leucine 177–leucine 197, methionine 207–glycine 227, valine 255–leucine 275, phenylalanine 292–valine 312, valine 354–glycine 374, isoleucine 388–glycine 408, isoleucine 416–isoleucine 436, isoleucine 457–phenylalanine 477, and alanine 492–leucine 512.

This sequence belongs to the NRAMP (TC 2.A.55) family.

It is found in the membrane. Probable metal transporter. The chain is Metal transporter Nramp4 (NRAMP4) from Oryza sativa subsp. japonica (Rice).